Here is a 547-residue protein sequence, read N- to C-terminus: Chaperonin GroEL (547 aa).

Residues 30–33 (TLGP), K51, 87–91 (DGTTT), G415, 479–481 (NAA), and D495 contribute to the ATP site.

The protein belongs to the chaperonin (HSP60) family. As to quaternary structure, forms a cylinder of 14 subunits composed of two heptameric rings stacked back-to-back. Interacts with the co-chaperonin GroES.

Its subcellular location is the cytoplasm. It catalyses the reaction ATP + H2O + a folded polypeptide = ADP + phosphate + an unfolded polypeptide.. Functionally, together with its co-chaperonin GroES, plays an essential role in assisting protein folding. The GroEL-GroES system forms a nano-cage that allows encapsulation of the non-native substrate proteins and provides a physical environment optimized to promote and accelerate protein folding. The chain is Chaperonin GroEL from Pseudomonas savastanoi pv. phaseolicola (strain 1448A / Race 6) (Pseudomonas syringae pv. phaseolicola (strain 1448A / Race 6)).